The following is a 203-amino-acid chain: Pyrrolidone-carboxylate peptidase 1 (203 aa).

Active-site residues include E78, C141, and H165.

Belongs to the peptidase C15 family. In terms of assembly, homotetramer.

The protein localises to the cytoplasm. It carries out the reaction Release of an N-terminal pyroglutamyl group from a polypeptide, the second amino acid generally not being Pro.. Its function is as follows. Removes 5-oxoproline from various penultimate amino acid residues except L-proline. This is Pyrrolidone-carboxylate peptidase 1 from Caldanaerobacter subterraneus subsp. tengcongensis (strain DSM 15242 / JCM 11007 / NBRC 100824 / MB4) (Thermoanaerobacter tengcongensis).